Reading from the N-terminus, the 261-residue chain is MFNIEKLQSLAKYRWVIVIILALLFSALSVSIFHLPFLMTALVLSIVGLIFAYHKSVWLVLFILSNLPMLATTIFAYQHHFTTLDTVIFFIIFLLTIISSYLIARKADIIPKISWKYFPPLKIIIGFALLFLVSILTGIFAQIINQSPTTSNQDSLNELQKVIPIAVFATQTLAAGFLEELVYRVGIFEVIFKNQKYFAFLTALLLFAYMHGPTDLYSWLTYGLMSLVLTSLYAKYRNFYLNMSVHLLWNLFGLVIALVLK.

The next 6 membrane-spanning stretches (helical) occupy residues 15–35 (WVIVIILALLFSALSVSIFHL), 43–63 (VLSIVGLIFAYHKSVWLVLFI), 84–104 (LDTVIFFIIFLLTIISSYLIA), 123–143 (IIIGFALLFLVSILTGIFAQI), 197–217 (YFAFLTALLLFAYMHGPTDLY), and 239–259 (FYLNMSVHLLWNLFGLVIALV).

It belongs to the UPF0177 family.

The protein resides in the cell membrane. This chain is UPF0177 protein YvdC (yvdC), found in Lactococcus lactis subsp. lactis (strain IL1403) (Streptococcus lactis).